A 266-amino-acid chain; its full sequence is Type III pantothenate kinase (266 aa).

Residue 6–13 (DIGNSRIK) coordinates ATP. Residues Tyr-94 and 101-104 (GIDR) each bind substrate. The active-site Proton acceptor is Asp-103. Asp-128 provides a ligand contact to K(+). Residue Thr-131 coordinates ATP. Residue Thr-183 participates in substrate binding.

This sequence belongs to the type III pantothenate kinase family. As to quaternary structure, homodimer. The cofactor is NH4(+). K(+) serves as cofactor.

The protein resides in the cytoplasm. The enzyme catalyses (R)-pantothenate + ATP = (R)-4'-phosphopantothenate + ADP + H(+). Its pathway is cofactor biosynthesis; coenzyme A biosynthesis; CoA from (R)-pantothenate: step 1/5. Catalyzes the phosphorylation of pantothenate (Pan), the first step in CoA biosynthesis. The sequence is that of Type III pantothenate kinase from Nitrosococcus oceani (strain ATCC 19707 / BCRC 17464 / JCM 30415 / NCIMB 11848 / C-107).